Consider the following 162-residue polypeptide: Phospholipase A and acyltransferase 3 (162 aa).

Over 1–133 the chain is Cytoplasmic; it reads MLAPIPEPKP…VPRSDQVRDA (133 aa). The 117-residue stretch at 13 to 129 folds into the LRAT domain; the sequence is LIEIFRPMYR…LRYGVPRSDQ (117 aa). Active-site residues include H23 and H35. C113 (acyl-thioester intermediate) is an active-site residue. A helical membrane pass occupies residues 134–154; the sequence is VKAVGIAGVGLAALGLVGVML. Residues 155–162 lie on the Lumenal side of the membrane; sequence SRNKKQKQ.

This sequence belongs to the H-rev107 family. Interacts with PPP2R1A; this interaction might decrease PP2A activity. In terms of tissue distribution, ubiquitously expressed in normal tissues but down-regulated in primary carcinomas or in many cell lines derived from tumors. Highly expressed in white adipose tissue and in adipocytes. Expressed at lower levels in brown adipose tissue.

The protein resides in the cell membrane. It localises to the cytoplasm. Its subcellular location is the cytosol. The protein localises to the perinuclear region. It is found in the peroxisome membrane. The protein resides in the mitochondrion membrane. It localises to the nucleus envelope. Its subcellular location is the lysosome membrane. The protein localises to the endoplasmic reticulum membrane. The enzyme catalyses a 1,2-diacyl-sn-glycero-3-phosphocholine + H2O = a 1-acyl-sn-glycero-3-phosphocholine + a fatty acid + H(+). It catalyses the reaction a 1,2-diacyl-sn-glycero-3-phosphocholine + H2O = a 2-acyl-sn-glycero-3-phosphocholine + a fatty acid + H(+). It carries out the reaction 1,2-dihexadecanoyl-sn-glycero-3-phosphocholine + H2O = 1-hexadecanoyl-sn-glycero-3-phosphocholine + hexadecanoate + H(+). The catalysed reaction is 1,2-dihexadecanoyl-sn-glycero-3-phosphocholine + H2O = 2-hexadecanoyl-sn-glycero-3-phosphocholine + hexadecanoate + H(+). The enzyme catalyses 1-hexadecanoyl-2-(9Z-octadecenoyl)-sn-glycero-3-phosphocholine + H2O = 2-(9Z-octadecenoyl)-sn-glycero-3-phosphocholine + hexadecanoate + H(+). It catalyses the reaction 1-hexadecanoyl-2-(9Z-octadecenoyl)-sn-glycero-3-phosphocholine + H2O = 1-hexadecanoyl-sn-glycero-3-phosphocholine + (9Z)-octadecenoate + H(+). It carries out the reaction 1-hexadecanoyl-2-(5Z,8Z,11Z,14Z-eicosatetraenoyl)-sn-glycero-3-phosphocholine + H2O = 1-hexadecanoyl-sn-glycero-3-phosphocholine + (5Z,8Z,11Z,14Z)-eicosatetraenoate + H(+). The catalysed reaction is 1-hexadecanoyl-2-(5Z,8Z,11Z,14Z-eicosatetraenoyl)-sn-glycero-3-phosphocholine + H2O = 2-(5Z,8Z,11Z,14Z)-eicosatetraenoyl-sn-glycero-3-phosphocholine + hexadecanoate + H(+). The enzyme catalyses 1-hexadecanoyl-2-(9Z,12Z-octadecadienoyl)-sn-glycero-3-phosphoethanolamine + H2O = 1-hexadecanoyl-sn-glycero-3-phosphoethanolamine + (9Z,12Z)-octadecadienoate + H(+). It catalyses the reaction 1-hexadecanoyl-2-(9Z,12Z-octadecadienoyl)-sn-glycero-3-phosphoethanolamine + H2O = 2-(9Z,12Z)-octadecadienoyl-sn-glycero-3-phosphoethanolamine + hexadecanoate + H(+). It carries out the reaction 1-hexadecanoyl-2-(5Z,8Z,11Z,14Z-eicosatetraenoyl)-sn-glycero-3-phosphoethanolamine + H2O = 1-hexadecanoyl-sn-glycero-3-phosphoethanolamine + (5Z,8Z,11Z,14Z)-eicosatetraenoate + H(+). The catalysed reaction is 1-hexadecanoyl-2-(5Z,8Z,11Z,14Z-eicosatetraenoyl)-sn-glycero-3-phosphoethanolamine + H2O = 2-(5Z,8Z,11Z,14Z)-eicosatetraenoyl-sn-glycero-3-phosphoethanolamine + hexadecanoate + H(+). The enzyme catalyses 1-hexanoyl-2-acyl-sn-glycero-3-phosphocholine + H2O = hexanoate + a 2-acyl-sn-glycero-3-phosphocholine + H(+). It catalyses the reaction 1-hexanoyl-2-acyl-sn-glycero-3-phosphocholine + H2O = 1-hexanoyl-sn-glycero-3-phosphocholine + a fatty acid + H(+). It carries out the reaction 1,2-diheptadecanoyl-sn-glycero-3-phosphoethanolamine + 1-(9Z-octadecenoyl)-2-hexadecanoyl-sn-glycero-3-phosphocholine = 1,2-diheptadecanoyl-sn-glycero-3-phospho-N-hexadecanoyl-ethanolamine + 1-(9Z-octadecenoyl)-sn-glycero-3-phosphocholine + H(+). The catalysed reaction is 1,2-diheptadecanoyl-sn-glycero-3-phosphoethanolamine + 1-(9Z-octadecenoyl)-2-hexadecanoyl-sn-glycero-3-phosphocholine = 1,2-diheptadecanoyl-sn-glycero-3-phospho-N-(9Z-octadecenoyl)-ethanolamine + 2-hexadecanoyl-sn-glycero-3-phosphocholine + H(+). The enzyme catalyses 1,2-dihexanoyl-sn-glycero-3-phosphoethanolamine + 2-heptanoyl-sn-glycero-3-phosphocholine = hexanoyl-sn-glycero-3-phosphoethanolamine + 1-hexanoyl-2-heptanoyl-sn-glycero-3-phosphocholine. It catalyses the reaction 1-hexadecanoyl-2-octadecanoyl-sn-glycero-3-phosphocholine + H2O = octadecanoate + 1-hexadecanoyl-sn-glycero-3-phosphocholine + H(+). It carries out the reaction 1-hexadecanoyl-2-octadecanoyl-sn-glycero-3-phosphocholine + H2O = 2-octadecanoyl-sn-glycero-3-phosphocholine + hexadecanoate + H(+). The catalysed reaction is 1-octadecanoyl-2-hexadecanoyl-sn-glycero-3-phosphocholine + H2O = 1-octadecanoyl-sn-glycero-3-phosphocholine + hexadecanoate + H(+). The enzyme catalyses 1-octadecanoyl-2-hexadecanoyl-sn-glycero-3-phosphocholine + H2O = 2-hexadecanoyl-sn-glycero-3-phosphocholine + octadecanoate + H(+). It catalyses the reaction 1-hexadecanoyl-2-(9Z,12Z-octadecadienoyl)-sn-glycero-3-phosphocholine + H2O = (9Z,12Z)-octadecadienoate + 1-hexadecanoyl-sn-glycero-3-phosphocholine + H(+). It carries out the reaction 1-hexadecanoyl-2-(9Z,12Z-octadecadienoyl)-sn-glycero-3-phosphocholine + H2O = 2-(9Z,12Z-octadecadienoyl)-sn-glycero-3-phosphocholine + hexadecanoate + H(+). The catalysed reaction is 1,2-di-(9Z-octadecenoyl)-sn-glycero-3-phosphocholine + H2O = 2-(9Z-octadecenoyl)-sn-glycero-3-phosphocholine + (9Z)-octadecenoate + H(+). The enzyme catalyses 1,2-dihexadecanoyl-sn-glycero-3-phosphocholine + H2O = hexadecanoyl-sn-glycero-3-phosphocholine + hexadecanoate + H(+). It catalyses the reaction 1,2-di-(9Z-octadecenoyl)-sn-glycero-3-phosphocholine + H2O = 1-(9Z-octadecenoyl)-sn-glycero-3-phosphocholine + (9Z)-octadecenoate + H(+). It carries out the reaction 1,2-di-(9Z-octadecenoyl)-sn-glycero-3-phosphoethanolamine + 1,2-dihexadecanoyl-sn-glycero-3-phosphocholine = hexadecanoyl-sn-glycero-3-phosphocholine + N-hexadecanoyl-1,2-di-(9Z-octadecenoyl)-sn-glycero-3-phosphoethanolamine + H(+). The catalysed reaction is 1,2-di-(9Z,12Z-octadecadienoyl)-sn-glycero-3-phosphocholine + H2O = 1-(9Z,12Z)-octadecadienoyl-sn-glycero-3-phosphocholine + (9Z,12Z)-octadecadienoate + H(+). Exhibits both phospholipase A1/2 and acyltransferase activities. Shows phospholipase A1 (PLA1) and A2 (PLA2), catalyzing the calcium-independent release of fatty acids from the sn-1 or sn-2 position of glycerophospholipids. For most substrates, PLA1 activity is much higher than PLA2 activity. Shows O-acyltransferase activity, catalyzing the transfer of a fatty acyl group from glycerophospholipid to the hydroxyl group of lysophospholipid. Shows N-acyltransferase activity,catalyzing the calcium-independent transfer of a fatty acyl group at the sn-1 position of phosphatidylcholine (PC) and other glycerophospholipids to the primary amine of phosphatidylethanolamine (PE), forming N-acylphosphatidylethanolamine (NAPE), which serves as precursor for N-acylethanolamines (NAEs). Exhibits high N-acyltransferase activity and low phospholipase A1/2 activity. Required for complete organelle rupture and degradation that occur during eye lens terminal differentiation, when fiber cells that compose the lens degrade all membrane-bound organelles in order to provide lens with transparency to allow the passage of light. Organelle membrane degradation is probably catalyzed by the phospholipase activity. In terms of biological role, (Microbial infection) Acts as a host factor for picornaviruses: required during early infection to promote viral genome release into the cytoplasm. The sequence is that of Phospholipase A and acyltransferase 3 from Mus musculus (Mouse).